A 497-amino-acid polypeptide reads, in one-letter code: 4,4'-diaponeurosporene oxygenase (497 aa).

Position 7–19 (Val-7–Ile-19) interacts with FAD.

The protein belongs to the carotenoid/retinoid oxidoreductase family. CrtP subfamily. It depends on FAD as a cofactor.

It catalyses the reaction all-trans-4,4'-diaponeurosporene + 2 AH2 + 2 O2 = 4,4'-diaponeurosporenal + 2 A + 3 H2O. It functions in the pathway carotenoid biosynthesis; staphyloxanthin biosynthesis; staphyloxanthin from farnesyl diphosphate: step 3/5. Involved in the biosynthesis of the yellow-orange carotenoid staphyloxanthin, which plays a role in the virulence via its protective function against oxidative stress. Catalyzes the oxidation of the terminal methyl side group of 4,4'-diaponeurosporene to form 4,4'-diaponeurosporen-4-al. This chain is 4,4'-diaponeurosporene oxygenase, found in Staphylococcus aureus (strain MW2).